A 342-amino-acid chain; its full sequence is Ribosomal RNA small subunit methyltransferase C (342 aa).

It belongs to the methyltransferase superfamily. RsmC family. Monomer.

The protein resides in the cytoplasm. The catalysed reaction is guanosine(1207) in 16S rRNA + S-adenosyl-L-methionine = N(2)-methylguanosine(1207) in 16S rRNA + S-adenosyl-L-homocysteine + H(+). Specifically methylates the guanine in position 1207 of 16S rRNA in the 30S particle. This chain is Ribosomal RNA small subunit methyltransferase C, found in Aeromonas hydrophila subsp. hydrophila (strain ATCC 7966 / DSM 30187 / BCRC 13018 / CCUG 14551 / JCM 1027 / KCTC 2358 / NCIMB 9240 / NCTC 8049).